The primary structure comprises 279 residues: Large ribosomal subunit protein uL2 (279 aa).

Basic residues-rich tracts occupy residues 211–221 (GRSRWRGKTPH) and 256–279 (SYGK…RKGK). Positions 211-279 (GRSRWRGKTP…KFIVRGRKGK (69 aa)) are disordered.

It belongs to the universal ribosomal protein uL2 family. In terms of assembly, part of the 50S ribosomal subunit. Forms a bridge to the 30S subunit in the 70S ribosome.

One of the primary rRNA binding proteins. Required for association of the 30S and 50S subunits to form the 70S ribosome, for tRNA binding and peptide bond formation. It has been suggested to have peptidyltransferase activity; this is somewhat controversial. Makes several contacts with the 16S rRNA in the 70S ribosome. The sequence is that of Large ribosomal subunit protein uL2 from Oenococcus oeni (strain ATCC BAA-331 / PSU-1).